The sequence spans 160 residues: Phosphopantetheine adenylyltransferase (160 aa).

Threonine 10 provides a ligand contact to substrate. ATP contacts are provided by residues 10–11 (TF) and histidine 18. 3 residues coordinate substrate: lysine 42, leucine 74, and arginine 88. Residues 89-91 (GLR), glutamate 99, and 124-130 (HGFLSST) each bind ATP.

The protein belongs to the bacterial CoaD family. As to quaternary structure, homohexamer. Requires Mg(2+) as cofactor.

It is found in the cytoplasm. The catalysed reaction is (R)-4'-phosphopantetheine + ATP + H(+) = 3'-dephospho-CoA + diphosphate. It functions in the pathway cofactor biosynthesis; coenzyme A biosynthesis; CoA from (R)-pantothenate: step 4/5. In terms of biological role, reversibly transfers an adenylyl group from ATP to 4'-phosphopantetheine, yielding dephospho-CoA (dPCoA) and pyrophosphate. This Aliivibrio fischeri (strain MJ11) (Vibrio fischeri) protein is Phosphopantetheine adenylyltransferase.